The sequence spans 241 residues: Biosynthetic peptidoglycan transglycosylase (241 aa).

The chain crosses the membrane as a helical span at residues 18-38; the sequence is GVIGIIALWMAGILIFAFLPV.

Belongs to the glycosyltransferase 51 family.

Its subcellular location is the cell inner membrane. The catalysed reaction is [GlcNAc-(1-&gt;4)-Mur2Ac(oyl-L-Ala-gamma-D-Glu-L-Lys-D-Ala-D-Ala)](n)-di-trans,octa-cis-undecaprenyl diphosphate + beta-D-GlcNAc-(1-&gt;4)-Mur2Ac(oyl-L-Ala-gamma-D-Glu-L-Lys-D-Ala-D-Ala)-di-trans,octa-cis-undecaprenyl diphosphate = [GlcNAc-(1-&gt;4)-Mur2Ac(oyl-L-Ala-gamma-D-Glu-L-Lys-D-Ala-D-Ala)](n+1)-di-trans,octa-cis-undecaprenyl diphosphate + di-trans,octa-cis-undecaprenyl diphosphate + H(+). Its pathway is cell wall biogenesis; peptidoglycan biosynthesis. Its function is as follows. Peptidoglycan polymerase that catalyzes glycan chain elongation from lipid-linked precursors. This Yersinia pseudotuberculosis serotype O:1b (strain IP 31758) protein is Biosynthetic peptidoglycan transglycosylase.